A 396-amino-acid polypeptide reads, in one-letter code: Zinc metalloproteinase nas-24 (396 aa).

A signal peptide spans 1-20; the sequence is MTRVVHIIGAAFLLSSYAYC. The Peptidase M12A domain maps to 44–230; that stretch reads ERLGSKWLGG…YKINQYYGCG (187 aa). N-linked (GlcNAc...) asparagine glycans are attached at residues asparagine 63 and asparagine 79. Disulfide bonds link cysteine 82-cysteine 229, cysteine 105-cysteine 129, cysteine 231-cysteine 251, and cysteine 253-cysteine 262. Histidine 137 contacts Zn(2+). Glutamate 138 is a catalytic residue. The Zn(2+) site is built by histidine 141 and histidine 147. Positions 224–263 constitute an EGF-like domain; sequence NQYYGCGCSTQLECKNGGYTSPSDCSRCNCPKGFFGKLCN. Asparagine 310 carries an N-linked (GlcNAc...) asparagine glycan.

It depends on Zn(2+) as a cofactor.

The protein resides in the secreted. Its function is as follows. Metalloprotease. This is Zinc metalloproteinase nas-24 (nas-24) from Caenorhabditis elegans.